The sequence spans 660 residues: Acetyl-coenzyme A synthetase (660 aa).

CoA-binding positions include 197–200 (RGGK) and threonine 317. ATP-binding positions include 397–399 (GEP), 421–426 (DTFWQT), aspartate 512, and arginine 528. Serine 536 is a binding site for CoA. Arginine 539 is an ATP binding site. Residues valine 550 and valine 555 each coordinate Mg(2+). Lysine 625 bears the N6-acetyllysine mark.

It belongs to the ATP-dependent AMP-binding enzyme family. Requires Mg(2+) as cofactor. In terms of processing, acetylated. Deacetylation by the SIR2-homolog deacetylase activates the enzyme.

The catalysed reaction is acetate + ATP + CoA = acetyl-CoA + AMP + diphosphate. It participates in ketone degradation; acetoin degradation. Its function is as follows. Catalyzes the conversion of acetate into acetyl-CoA (AcCoA), an essential intermediate at the junction of anabolic and catabolic pathways. AcsA undergoes a two-step reaction. In the first half reaction, AcsA combines acetate with ATP to form acetyl-adenylate (AcAMP) intermediate. In the second half reaction, it can then transfer the acetyl group from AcAMP to the sulfhydryl group of CoA, forming the product AcCoA. Although acetate is the preferred substrate of AcsA, propionate is also used, but at a diminished rate compared with that of acetate. Fatty acids with more than three carbon atoms are usually not accepted as substrates by AcsA. The polypeptide is Acetyl-coenzyme A synthetase (Cupriavidus necator (strain ATCC 17699 / DSM 428 / KCTC 22496 / NCIMB 10442 / H16 / Stanier 337) (Ralstonia eutropha)).